A 369-amino-acid chain; its full sequence is Quinolinate synthase (369 aa).

Residues H47 and S64 each coordinate iminosuccinate. C111 is a binding site for [4Fe-4S] cluster. Iminosuccinate is bound by residues 142–144 (YVN) and S163. [4Fe-4S] cluster is bound at residue C231. Iminosuccinate contacts are provided by residues 257 to 259 (HPE) and T274. C321 serves as a coordination point for [4Fe-4S] cluster.

The protein belongs to the quinolinate synthase family. Type 3 subfamily. [4Fe-4S] cluster is required as a cofactor.

The protein resides in the cytoplasm. It carries out the reaction iminosuccinate + dihydroxyacetone phosphate = quinolinate + phosphate + 2 H2O + H(+). It functions in the pathway cofactor biosynthesis; NAD(+) biosynthesis; quinolinate from iminoaspartate: step 1/1. Functionally, catalyzes the condensation of iminoaspartate with dihydroxyacetone phosphate to form quinolinate. In Bacillus pumilus (strain SAFR-032), this protein is Quinolinate synthase.